Reading from the N-terminus, the 211-residue chain is Uridine kinase (211 aa).

15 to 22 (GGSGSGKT) contributes to the ATP binding site.

This sequence belongs to the uridine kinase family.

It localises to the cytoplasm. It carries out the reaction uridine + ATP = UMP + ADP + H(+). The catalysed reaction is cytidine + ATP = CMP + ADP + H(+). It participates in pyrimidine metabolism; CTP biosynthesis via salvage pathway; CTP from cytidine: step 1/3. The protein operates within pyrimidine metabolism; UMP biosynthesis via salvage pathway; UMP from uridine: step 1/1. This chain is Uridine kinase, found in Lactobacillus helveticus (strain DPC 4571).